The chain runs to 434 residues: Chaperone SurA (434 aa).

The signal sequence occupies residues 1-22; it reads MKPSKHLIFALFALAISQPTMA. 2 consecutive PpiC domains span residues 173-274 and 283-383; these read DVEY…KIMD and IEEV…QLEE.

It is found in the periplasm. It carries out the reaction [protein]-peptidylproline (omega=180) = [protein]-peptidylproline (omega=0). Its function is as follows. Chaperone involved in the correct folding and assembly of outer membrane proteins. Recognizes specific patterns of aromatic residues and the orientation of their side chains, which are found more frequently in integral outer membrane proteins. May act in both early periplasmic and late outer membrane-associated steps of protein maturation. This chain is Chaperone SurA, found in Shewanella sp. (strain MR-7).